The following is a 515-amino-acid chain: Putative asparagine synthetase [glutamine-hydrolyzing] 2 (515 aa).

C2 acts as the For GATase activity in catalysis. Residues 2-229 (CGINGIIRFG…ARQNLIFDLD (228 aa)) form the Glutamine amidotransferase type-2 domain. L-glutamine is bound by residues 52–56 (RLAIL), 92–94 (NGE), and D114. Residues I306 and 378 to 379 (SG) contribute to the ATP site.

This sequence belongs to the asparagine synthetase family.

The enzyme catalyses L-aspartate + L-glutamine + ATP + H2O = L-asparagine + L-glutamate + AMP + diphosphate + H(+). It functions in the pathway amino-acid biosynthesis; L-asparagine biosynthesis; L-asparagine from L-aspartate (L-Gln route): step 1/1. The sequence is that of Putative asparagine synthetase [glutamine-hydrolyzing] 2 from Methanocaldococcus jannaschii (strain ATCC 43067 / DSM 2661 / JAL-1 / JCM 10045 / NBRC 100440) (Methanococcus jannaschii).